We begin with the raw amino-acid sequence, 249 residues long: 2,3-bisphosphoglycerate-dependent phosphoglycerate mutase (249 aa).

Substrate contacts are provided by residues 11 to 18 (RHGESEWN), 24 to 25 (TG), arginine 63, 90 to 93 (ERHY), lysine 101, and 117 to 118 (RR). Histidine 12 (tele-phosphohistidine intermediate) is an active-site residue. Glutamate 90 serves as the catalytic Proton donor/acceptor. A disordered region spans residues 119-138 (SYDTPPPPIERGSTYSQDAD). Position 184–185 (184–185 (GN)) interacts with substrate.

The protein belongs to the phosphoglycerate mutase family. BPG-dependent PGAM subfamily.

The enzyme catalyses (2R)-2-phosphoglycerate = (2R)-3-phosphoglycerate. Its pathway is carbohydrate degradation; glycolysis; pyruvate from D-glyceraldehyde 3-phosphate: step 3/5. In terms of biological role, catalyzes the interconversion of 2-phosphoglycerate and 3-phosphoglycerate. This Mycolicibacterium paratuberculosis (strain ATCC BAA-968 / K-10) (Mycobacterium paratuberculosis) protein is 2,3-bisphosphoglycerate-dependent phosphoglycerate mutase.